We begin with the raw amino-acid sequence, 461 residues long: pre-mRNA splicing regulator USH1G (461 aa).

ANK repeat units lie at residues 31–60 (DGMTPTLWAAYHGNLESLRLIVSRGGDPDK), 64–93 (WGNTPLHLAASNGHLHCLSFLVSFGANIWC), and 97–126 (DYHTPLDMAAMKGHMECVRYLDSIAAKQSS). The disordered stretch occupies residues 329–368 (LGREDGGLDGAGTPRGRLHSSPSLDDDSLGSANSLQDRSC). Positions 385 to 447 (LEPETSPLET…KILGAVRRRR (63 aa)) constitute an SAM domain. Ser-422 is modified (phosphoserine).

As to quaternary structure, part of a complex composed of USH1C, USH1G and MYO7A. Interacts with USH1C (via the first PDZ domain). Interacts with PDZD7. Interacts with CDH23 and PCDH15; these interactions may recruit USH1G to the plasma membrane. Interacts with intraflagellar transport proteins IFT20, IFT52 and IFT57. Interacts with splicing factors SF3B1, PRPF6, PRPF31 and SON. Interacts with the U4/U6.U5 tri-small nuclear ribonucleoprotein (tri-snRNP) complex in the presence of pre-mRNAs. Interacts (via SAM domain) with MAGI2 (via PDZ 6 domain); the interaction is triggered by phosphorylation of USH1G by CK2 and negatively regulates MAGI2-mediated endocytosis. Detected in stereocilia from cochlear hair cells (at protein level). Detected in retinal photoreceptor cell cilia (at protein level). Highly expressed in the cochlea, testis, cerebellum and eye, and low levels in brain, thymus and spleen. Significant signals detected in the neurosensory epithelium of inner ear cochlea and saccule, especially in inner and outer hair cells.

The protein resides in the cytoplasm. Its subcellular location is the cytosol. The protein localises to the cytoskeleton. It is found in the cell membrane. It localises to the cell projection. The protein resides in the cilium. Its subcellular location is the nucleus speckle. The protein localises to the nucleus. It is found in the cajal body. It localises to the microtubule organizing center. The protein resides in the centrosome. Its subcellular location is the photoreceptor inner segment. Plays a role in pre-mRNA splicing by regulating the release and transfer of U4/U6.U5 tri-small nuclear ribonucleoprotein (tri-snRNP) complexes from their assembly site in Cajal bodies to nuclear speckles, thereby contributing to the assembly of the pre-catalytic spliceosome on target pre-mRNAs. May also participate in recycling of snRNPs back to Cajal bodies during splicing. Plays a role in regulating MAGI2-mediated endocytosis. Anchoring/scaffolding protein that is a part of the functional network formed by USH1C, USH1G, CDH23 and MYO7A that mediates mechanotransduction in cochlear hair cells. Required for normal development and maintenance of cochlear hair cell bundles. Required for normal hearing. In Mus musculus (Mouse), this protein is pre-mRNA splicing regulator USH1G (Ush1g).